Reading from the N-terminus, the 723-residue chain is Bifunctional lysine-specific demethylase and histidyl-hydroxylase NO66 (723 aa).

Disordered stretches follow at residues 13-34 (KKTAKKPAKKTTKQNRQKQKAA) and 48-213 (SAVK…APSC). Residues 14–31 (KTAKKPAKKTTKQNRQKQ) show a composition bias toward basic residues. Residues 49-72 (AVKQNNGAKGKAKANGVKGNAKAQ) show a composition bias toward low complexity. Composition is skewed to acidic residues over residues 88 to 106 (ESVDDYSSDSSYDEDEDNE) and 114 to 129 (EDDYGSELSSGEEFEE). The segment covering 133–155 (NSPSGSCSCSASSGSSNTENSPP) has biased composition (low complexity). Residues 190 to 199 (EQKEGKELSK) are compositionally biased toward basic and acidic residues. A compositionally biased stretch (low complexity) spans 204–213 (KSAPAAAPSC). In terms of domain architecture, JmjC spans 379–518 (NPSTYLKGLR…NLMEALMPAV (140 aa)). Positions 419, 421, and 484 each coordinate Fe cation.

The protein belongs to the ROX family. NO66 subfamily. Fe(2+) serves as cofactor.

Its subcellular location is the nucleus. The catalysed reaction is N(6),N(6)-dimethyl-L-lysyl(36)-[histone H3] + 2 2-oxoglutarate + 2 O2 = L-lysyl(36)-[histone H3] + 2 formaldehyde + 2 succinate + 2 CO2. In terms of biological role, oxygenase that can act as both a histone lysine demethylase and a ribosomal histidine hydroxylase. Specifically demethylates 'Lys-4' (H3K4me) and 'Lys-36' (H3K36me) of histone H3, thereby playing a central role in histone code. The sequence is that of Bifunctional lysine-specific demethylase and histidyl-hydroxylase NO66 from Drosophila grimshawi (Hawaiian fruit fly).